The following is a 319-amino-acid chain: Tetrahydromethanopterin S-methyltransferase subunit H (319 aa).

It belongs to the MtrH family. The complex is composed of 8 subunits; MtrA, MtrB, MtrC, MtrD, MtrE, MtrF, MtrG and MtrH.

The catalysed reaction is 5-methyl-5,6,7,8-tetrahydromethanopterin + coenzyme M + 2 Na(+)(in) = 5,6,7,8-tetrahydromethanopterin + methyl-coenzyme M + 2 Na(+)(out). Its pathway is one-carbon metabolism; methanogenesis from CO(2); methyl-coenzyme M from 5,10-methylene-5,6,7,8-tetrahydromethanopterin: step 2/2. Functionally, part of a complex that catalyzes the formation of methyl-coenzyme M and tetrahydromethanopterin from coenzyme M and methyl-tetrahydromethanopterin. This is an energy-conserving, sodium-ion translocating step. MtrH catalyzes the transfer of the methyl group from methyl-tetrahydromethanopterin to the corrinoid prosthetic group of MtrA. The chain is Tetrahydromethanopterin S-methyltransferase subunit H from Methanococcus maripaludis (strain C5 / ATCC BAA-1333).